A 152-amino-acid chain; its full sequence is MFRGATLVNLDSKGRLTVPTRYREQLIESATGQIVCTIDIHHPCLLLYPLPEWEIIEQKLSRLSSMNPVERRVQRLLLGHASECQMDGAGRLLIAPVLRQHAGLTKEVMLVGQFNKFELWDETTWYQQVKEDIDAEQSATETLSERLQDLSL.

SpoVT-AbrB domains lie at 5 to 52 (ATLV…PLPE) and 81 to 124 (ASEC…DETT).

It belongs to the MraZ family. Forms oligomers.

The protein localises to the cytoplasm. Its subcellular location is the nucleoid. Its function is as follows. Negatively regulates its own expression and that of the subsequent genes in the proximal part of the division and cell wall (dcw) gene cluster. Acts by binding directly to DNA. May also regulate the expression of genes outside the dcw cluster. The protein is Transcriptional regulator MraZ of Salmonella typhi.